A 145-amino-acid chain; its full sequence is Ribosomal RNA large subunit methyltransferase H (145 aa).

S-adenosyl-L-methionine contacts are provided by residues Leu64, Gly93, and 112 to 117 (LSPLTF).

Belongs to the RNA methyltransferase RlmH family. As to quaternary structure, homodimer.

Its subcellular location is the cytoplasm. It catalyses the reaction pseudouridine(1915) in 23S rRNA + S-adenosyl-L-methionine = N(3)-methylpseudouridine(1915) in 23S rRNA + S-adenosyl-L-homocysteine + H(+). Functionally, specifically methylates the pseudouridine at position 1915 (m3Psi1915) in 23S rRNA. The chain is Ribosomal RNA large subunit methyltransferase H from Prochlorococcus marinus (strain NATL2A).